The primary structure comprises 166 residues: Urease accessory protein UreE 2 (166 aa).

Residues 133-156 (QPEHGAYGGGHHHSRAGEEDFNYP) form a disordered region.

The protein belongs to the UreE family.

It localises to the cytoplasm. Its function is as follows. Involved in urease metallocenter assembly. Binds nickel. Probably functions as a nickel donor during metallocenter assembly. In Pseudomonas syringae pv. tomato (strain ATCC BAA-871 / DC3000), this protein is Urease accessory protein UreE 2.